Reading from the N-terminus, the 738-residue chain is uncharacterized protein (738 aa).

Polar residues-rich tracts occupy residues 1–34 (MSSS…QVSS), 140–169 (TSSD…QSPP), and 177–197 (KPFS…STKD). Disordered stretches follow at residues 1–51 (MSSS…AASI) and 140–197 (TSSD…STKD). In terms of domain architecture, RRM spans 363 to 434 (SRLFLGHLNT…QKLHLEISKI (72 aa)). The tract at residues 466 to 487 (YPTSSRKRTRSPLMSKGKSYDR) is disordered.

This is an uncharacterized protein from Schizosaccharomyces pombe (strain 972 / ATCC 24843) (Fission yeast).